The sequence spans 79 residues: Small ribosomal subunit protein bS18 (79 aa).

Belongs to the bacterial ribosomal protein bS18 family. In terms of assembly, part of the 30S ribosomal subunit. Forms a tight heterodimer with protein bS6.

Binds as a heterodimer with protein bS6 to the central domain of the 16S rRNA, where it helps stabilize the platform of the 30S subunit. The chain is Small ribosomal subunit protein bS18 from Renibacterium salmoninarum (strain ATCC 33209 / DSM 20767 / JCM 11484 / NBRC 15589 / NCIMB 2235).